Reading from the N-terminus, the 315-residue chain is MLSREDFYMIKQMRHEGAYIVDIATQIGCSERTVRRYLKYPEPPARKTRHKMVKLKPFMDYIDMRLAENVWNSEVIFAEIKAMGYTGGRSMLRYYIQPKRKMRPSKRTVRFETQPGYQLQHDWGEVEVEVAGQRCKVNFAVNTLGFSRSFHVFAAPKHDAEHTYESLVRAFRYFGGCVKTVLVDNQKAAVLKNNNGKVVFNSGFLLLADHYNFLPRACRPRRARTKGKVERMVKYLKENFFVRYRRFDSFTHVNQQLEQWIADVADKRELRQFKETPEQRSRWSRNICSVTGYRLRYQLLRYPPCVLGQLYRGWW.

The HTH IS21-type domain maps to 5–66 (EDFYMIKQMR…PFMDYIDMRL (62 aa)). In terms of domain architecture, Integrase catalytic spans 111–285 (FETQPGYQLQ…TPEQRSRWSR (175 aa)).

Belongs to the transposase IS21/IS408/IS1162 family.

Involved in the transposition of the insertion sequence. The protein is Transposase for insertion sequence element IS640 (istA) of Shigella sonnei.